The primary structure comprises 109 residues: UPF0122 protein CLH_1195 (109 aa).

This sequence belongs to the UPF0122 family.

Functionally, might take part in the signal recognition particle (SRP) pathway. This is inferred from the conservation of its genetic proximity to ftsY/ffh. May be a regulatory protein. This chain is UPF0122 protein CLH_1195, found in Clostridium botulinum (strain Alaska E43 / Type E3).